Reading from the N-terminus, the 390-residue chain is UPF0496 protein At1g20180 (390 aa).

The next 2 helical transmembrane spans lie at Leu228–Ala248 and His250–Leu270.

The protein belongs to the UPF0496 family.

The protein localises to the membrane. This is UPF0496 protein At1g20180 from Arabidopsis thaliana (Mouse-ear cress).